Here is a 308-residue protein sequence, read N- to C-terminus: Ornithine carbamoyltransferase (308 aa).

Residues 56–59 (STRT), glutamine 83, arginine 107, and 134–137 (HPCQ) contribute to the carbamoyl phosphate site. L-ornithine contacts are provided by residues asparagine 165, aspartate 225, and 229-230 (SM). Carbamoyl phosphate contacts are provided by residues 264–265 (CL) and arginine 292.

It belongs to the aspartate/ornithine carbamoyltransferase superfamily. OTCase family.

The protein localises to the cytoplasm. It carries out the reaction carbamoyl phosphate + L-ornithine = L-citrulline + phosphate + H(+). The protein operates within amino-acid biosynthesis; L-arginine biosynthesis; L-arginine from L-ornithine and carbamoyl phosphate: step 1/3. In terms of biological role, reversibly catalyzes the transfer of the carbamoyl group from carbamoyl phosphate (CP) to the N(epsilon) atom of ornithine (ORN) to produce L-citrulline. This chain is Ornithine carbamoyltransferase, found in Nitrobacter winogradskyi (strain ATCC 25391 / DSM 10237 / CIP 104748 / NCIMB 11846 / Nb-255).